A 125-amino-acid chain; its full sequence is UPF0332 protein AF_0298 (125 aa).

This sequence belongs to the UPF0332 family.

The sequence is that of UPF0332 protein AF_0298 from Archaeoglobus fulgidus (strain ATCC 49558 / DSM 4304 / JCM 9628 / NBRC 100126 / VC-16).